We begin with the raw amino-acid sequence, 345 residues long: High mobility group protein 20A (345 aa).

Disordered regions lie at residues 1–130 (MEST…PFPE) and 166–206 (QKYQ…EKES). Polar residues-rich tracts occupy residues 22–38 (NNQP…SSQA) and 57–67 (LHQSGEQQLGN). The segment covering 80 to 94 (ARRGGWNKGRKRKRS) has biased composition (basic residues). The HMG box DNA-binding region spans 101–169 (PKAPLTGYVR…RYTKELQKYQ (69 aa)). Positions 112–125 (MNERREQLRTERPD) are enriched in basic and acidic residues. Positions 167 to 178 (KYQNTDAYQTYS) are enriched in polar residues. Residues 179 to 189 (RKAKSRQKGRQ) are compositionally biased toward basic residues. Positions 227–285 (SKAREAELRQLRKSNMEFEERNAALQKHVESMRSAVQRLEAELSQEHERNSLLQQHLQS) form a coiled coil.

It localises to the nucleus. Its function is as follows. Plays a role in neuronal differentiation. This is High mobility group protein 20A (hmg20a) from Xenopus laevis (African clawed frog).